The primary structure comprises 206 residues: Small ribosomal subunit protein uS4 (206 aa).

The region spanning 98-158 (RRLDNVVFRL…EKSRSMELIK (61 aa)) is the S4 RNA-binding domain.

It belongs to the universal ribosomal protein uS4 family. Part of the 30S ribosomal subunit. Contacts protein S5. The interaction surface between S4 and S5 is involved in control of translational fidelity.

Its function is as follows. One of the primary rRNA binding proteins, it binds directly to 16S rRNA where it nucleates assembly of the body of the 30S subunit. Functionally, with S5 and S12 plays an important role in translational accuracy. The polypeptide is Small ribosomal subunit protein uS4 (Thermoanaerobacter pseudethanolicus (strain ATCC 33223 / 39E) (Clostridium thermohydrosulfuricum)).